The following is a 329-amino-acid chain: VSG expression site-associated protein 221A (329 aa).

The N-terminal stretch at 1 to 23 is a signal peptide; that stretch reads MKVEIVELVVLLFSVTCVDAWLQ. N-linked (GlcNAc...) asparagine glycans are attached at residues Asn-73, Asn-294, and Asn-308.

Not known but may be related to activation of the variant surface glycoprotein genes. This chain is VSG expression site-associated protein 221A, found in Trypanosoma brucei brucei.